Consider the following 75-residue polypeptide: Small integral membrane protein 7-A (75 aa).

Residues 1 to 17 (MIGDLLLFGTLLVNAGA) form the signal peptide. At 18 to 53 (VLNFKLKKKESQGFGDDLTEATTGDNIREFLLSLRY) the chain is on the extracellular side. Residues 54–74 (FRIFIALWNIFMMFCMIVLFG) form a helical membrane-spanning segment. A topological domain (cytoplasmic) is located at residue serine 75.

It belongs to the SMIM7 family.

Its subcellular location is the membrane. This Xenopus laevis (African clawed frog) protein is Small integral membrane protein 7-A (smim7-a).